A 498-amino-acid chain; its full sequence is NADPH:adrenodoxin oxidoreductase, mitochondrial (498 aa).

The N-terminal 37 residues, 1–37, are a transit peptide targeting the mitochondrion; it reads MSTHKAALCKVQILKLFLISARCVRITRFYGVCGLST. Alanine 54, glutamate 75, leucine 83, and valine 119 together coordinate FAD. Residues 190–193, 234–235, and glutamate 246 contribute to the NADP(+) site; these read QGNV and RR. FAD is bound by residues tryptophan 404 and 411 to 413; that span reads GVI. Glycine 411 is an NADP(+) binding site. Over residues 469–488 the composition is skewed to basic and acidic residues; that stretch reads DSEETRRGETRGKPREKMLD. The disordered stretch occupies residues 469–489; sequence DSEETRRGETRGKPREKMLDV.

It belongs to the ferredoxin--NADP reductase type 1 family. Requires FAD as cofactor.

The protein resides in the mitochondrion inner membrane. It catalyses the reaction 2 reduced [adrenodoxin] + NADP(+) + H(+) = 2 oxidized [adrenodoxin] + NADPH. It participates in steroid metabolism; cholesterol metabolism. Serves as the first electron transfer protein in all the mitochondrial P450 systems including cholesterol side chain cleavage in all steroidogenic tissues, steroid 11-beta hydroxylation in the adrenal cortex, 25-OH-vitamin D3-24 hydroxylation in the kidney, and sterol C-27 hydroxylation in the liver. This Salvelinus fontinalis (Brook trout) protein is NADPH:adrenodoxin oxidoreductase, mitochondrial (fdxr).